Here is a 406-residue protein sequence, read N- to C-terminus: 2,3-bisphosphoglycerate-independent phosphoglycerate mutase (406 aa).

It belongs to the BPG-independent phosphoglycerate mutase family. A-PGAM subfamily.

It carries out the reaction (2R)-2-phosphoglycerate = (2R)-3-phosphoglycerate. It functions in the pathway carbohydrate degradation; glycolysis; pyruvate from D-glyceraldehyde 3-phosphate: step 3/5. Its function is as follows. Catalyzes the interconversion of 2-phosphoglycerate and 3-phosphoglycerate. The chain is 2,3-bisphosphoglycerate-independent phosphoglycerate mutase from Methanococcus maripaludis (strain C6 / ATCC BAA-1332).